The chain runs to 671 residues: Gametogenetin-binding protein 2-like (671 aa).

Disordered regions lie at residues 372–489 (REQK…ARVQ) and 532–562 (VRDS…SEVS). The segment covering 373–384 (EQKKLKKKKKKD) has biased composition (basic residues). A compositionally biased stretch (basic and acidic residues) spans 385–395 (EKKNLLHRQCD). The segment covering 396-420 (DTEANESDEEEEELRNEELDLEEES) has biased composition (acidic residues). Basic residues predominate over residues 455–472 (TKSKPKKQSKKKKQKKAA). Polar residues-rich tracts occupy residues 476 to 486 (MGNQKQMQATA) and 546 to 557 (GSRTSSAISSPE).

This is Gametogenetin-binding protein 2-like from Drosophila melanogaster (Fruit fly).